The chain runs to 588 residues: Cyclin-dependent kinase 8 (588 aa).

Positions 26–348 (FENSKEIGRG…CEEAMNDIYF (323 aa)) constitute a Protein kinase domain. ATP is bound by residues 32 to 40 (IGRGTYGLV) and K60. D158 serves as the catalytic Proton acceptor. 3 disordered regions span residues 376 to 426 (MTVA…GAHP), 510 to 529 (PGPSGYYPQRPGQPTGAVPG), and 546 to 588 (MRAP…QYHR). Residues 382–426 (QAQQQHQQQQVQMQQQPQMGQQQMMGQPQMVQPQMGQPPMGGAHP) are compositionally biased toward low complexity. Positions 557–588 (MPGRGMAPPQMGQQQPGPNQQQQQQWQQQYHR) are enriched in low complexity.

It belongs to the protein kinase superfamily. CMGC Ser/Thr protein kinase family. CDC2/CDKX subfamily. Component of the Mediator complex. Requires Mg(2+) as cofactor.

It localises to the nucleus. It carries out the reaction L-seryl-[protein] + ATP = O-phospho-L-seryl-[protein] + ADP + H(+). The enzyme catalyses L-threonyl-[protein] + ATP = O-phospho-L-threonyl-[protein] + ADP + H(+). It catalyses the reaction [DNA-directed RNA polymerase] + ATP = phospho-[DNA-directed RNA polymerase] + ADP + H(+). Its function is as follows. Component of the Mediator complex, a coactivator involved in regulated gene transcription of nearly all RNA polymerase II-dependent genes. Mediator functions as a bridge to convey information from gene-specific regulatory proteins to the basal RNA polymerase II transcription machinery. Mediator is recruited to promoters by direct interactions with regulatory proteins and serves as a scaffold for the assembly of a functional pre-initiation complex with RNA polymerase II and the general transcription factors. Phosphorylates the CTD (C-terminal domain) of the large subunit of RNA polymerase II (RNAp II), which may inhibit the formation of a transcription initiation complex. The chain is Cyclin-dependent kinase 8 (cdk-8) from Caenorhabditis elegans.